A 987-amino-acid chain; its full sequence is Eukaryotic translation initiation factor 3 subunit A (987 aa).

Positions 93–122 (LHLATDKAEQARSQADALEEALDVDDLEAD) form a coiled coil. The PCI domain maps to 316–513 (LQLIASSVVL…GVVIFGNLGI (198 aa)). Coiled coils occupy residues 556-742 (TVEK…EKNR) and 797-858 (LKIE…REEL). Basic and acidic residues predominate over residues 808-859 (QEEEEARKQEEAERLKKVEAERKANLDKAFEKQRQREIELEEKSRREREELL). Residues 808 to 987 (QEEEEARKQE…GSSRPRPTQR (180 aa)) are disordered. Residues 872-894 (PTVTPVGTTAPAAAAAAAGAPAA) are compositionally biased toward low complexity. 2 stretches are compositionally biased toward polar residues: residues 905–916 (TEVSGPSAPTSS) and 976–987 (TFGSSRPRPTQR).

The protein belongs to the eIF-3 subunit A family. Component of the eukaryotic translation initiation factor 3 (eIF-3) complex. Binds to the translation initiation factor TIF3H1.

The protein resides in the cytoplasm. Functionally, RNA-binding component of the eukaryotic translation initiation factor 3 (eIF-3) complex, which is involved in protein synthesis of a specialized repertoire of mRNAs and, together with other initiation factors, stimulates binding of mRNA and methionyl-tRNAi to the 40S ribosome. The eIF-3 complex specifically targets and initiates translation of a subset of mRNAs involved in cell proliferation. The polypeptide is Eukaryotic translation initiation factor 3 subunit A (TIF3A1) (Arabidopsis thaliana (Mouse-ear cress)).